Here is a 101-residue protein sequence, read N- to C-terminus: Small ribosomal subunit protein uS14 (101 aa).

Belongs to the universal ribosomal protein uS14 family. Part of the 30S ribosomal subunit. Contacts proteins S3 and S10.

Functionally, binds 16S rRNA, required for the assembly of 30S particles and may also be responsible for determining the conformation of the 16S rRNA at the A site. This Francisella philomiragia subsp. philomiragia (strain ATCC 25017 / CCUG 19701 / FSC 153 / O#319-036) protein is Small ribosomal subunit protein uS14.